We begin with the raw amino-acid sequence, 132 residues long: Small ribosomal subunit protein uS8 (132 aa).

The protein belongs to the universal ribosomal protein uS8 family. Part of the 30S ribosomal subunit. Contacts proteins S5 and S12.

Its function is as follows. One of the primary rRNA binding proteins, it binds directly to 16S rRNA central domain where it helps coordinate assembly of the platform of the 30S subunit. The protein is Small ribosomal subunit protein uS8 of Borrelia hermsii (strain HS1 / DAH).